We begin with the raw amino-acid sequence, 458 residues long: UDP-N-acetylmuramate--L-alanine ligase (458 aa).

118–124 (GTHGKTT) provides a ligand contact to ATP.

The protein belongs to the MurCDEF family.

It localises to the cytoplasm. It catalyses the reaction UDP-N-acetyl-alpha-D-muramate + L-alanine + ATP = UDP-N-acetyl-alpha-D-muramoyl-L-alanine + ADP + phosphate + H(+). Its pathway is cell wall biogenesis; peptidoglycan biosynthesis. Its function is as follows. Cell wall formation. This chain is UDP-N-acetylmuramate--L-alanine ligase, found in Clostridium botulinum (strain Loch Maree / Type A3).